A 275-amino-acid chain; its full sequence is ATP synthase subunit delta (275 aa).

Belongs to the ATPase delta chain family. F-type ATPases have 2 components, F(1) - the catalytic core - and F(0) - the membrane proton channel. F(1) has five subunits: alpha(3), beta(3), gamma(1), delta(1), epsilon(1). F(0) has three main subunits: a(1), b(2) and c(10-14). The alpha and beta chains form an alternating ring which encloses part of the gamma chain. F(1) is attached to F(0) by a central stalk formed by the gamma and epsilon chains, while a peripheral stalk is formed by the delta and b chains.

It is found in the cell membrane. In terms of biological role, f(1)F(0) ATP synthase produces ATP from ADP in the presence of a proton or sodium gradient. F-type ATPases consist of two structural domains, F(1) containing the extramembraneous catalytic core and F(0) containing the membrane proton channel, linked together by a central stalk and a peripheral stalk. During catalysis, ATP synthesis in the catalytic domain of F(1) is coupled via a rotary mechanism of the central stalk subunits to proton translocation. Its function is as follows. This protein is part of the stalk that links CF(0) to CF(1). It either transmits conformational changes from CF(0) to CF(1) or is implicated in proton conduction. This Bifidobacterium adolescentis (strain ATCC 15703 / DSM 20083 / NCTC 11814 / E194a) protein is ATP synthase subunit delta.